The primary structure comprises 80 residues: Acyl carrier protein (80 aa).

Residues 4–79 enclose the Carrier domain; the sequence is EEIKDKVFDI…QAIDYIVNAK (76 aa). S39 is subject to O-(pantetheine 4'-phosphoryl)serine.

It belongs to the acyl carrier protein (ACP) family. In terms of processing, 4'-phosphopantetheine is transferred from CoA to a specific serine of apo-ACP by AcpS. This modification is essential for activity because fatty acids are bound in thioester linkage to the sulfhydryl of the prosthetic group.

The protein resides in the cytoplasm. The protein operates within lipid metabolism; fatty acid biosynthesis. In terms of biological role, carrier of the growing fatty acid chain in fatty acid biosynthesis. This chain is Acyl carrier protein, found in Prosthecochloris aestuarii (strain DSM 271 / SK 413).